The following is a 602-amino-acid chain: Type II restriction enzyme StsI (602 aa).

The enzyme catalyses Endonucleolytic cleavage of DNA to give specific double-stranded fragments with terminal 5'-phosphates.. Functionally, an S subtype restriction enzyme that recognizes the double-stranded sequences 5'-GGATG-3' and 3'-CATCC-5' and cleaves respectively 15 bases after G-1 and 14 bases before C-1. The protein is Type II restriction enzyme StsI (stsIR) of Streptococcus sanguinis.